We begin with the raw amino-acid sequence, 693 residues long: Endoprotease bli (693 aa).

The N-terminal stretch at 1–20 (MYWQLVRILVLFDCLQKILA) is a signal peptide. A propeptide spans 21–116 (IEHDSICIAD…EQRPRVRRKR (96 aa)) (inhibition peptide). Aspartate 161 lines the Ca(2+) pocket. Positions 167–482 (QWYLNNGAQG…YGLMDAGALV (316 aa)) constitute a Peptidase S8 domain. N-linked (GlcNAc...) asparagine glycosylation occurs at asparagine 194. Catalysis depends on aspartate 201, which acts as the Charge relay system. Aspartate 202 is a binding site for substrate. 4 residues coordinate Ca(2+): aspartate 210, aspartate 222, aspartate 227, and aspartate 229. The disordered stretch occupies residues 215–242 (YDPLASTDINGHDDDPTPQDDGDNKHGT). 237 to 238 (DN) provides a ligand contact to substrate. Histidine 240 acts as the Charge relay system in catalysis. Positions 251, 254, 256, and 258 each coordinate Ca(2+). Cystine bridges form between cysteine 257/cysteine 406 and cysteine 349/cysteine 379. Substrate is bound by residues glutamate 282, 299-304 (SWGPED), aspartate 310, and 338-341 (ASGN). Residue aspartate 304 coordinates Ca(2+). Aspartate 347 is a binding site for Ca(2+). Substrate is bound by residues aspartate 352 and tyrosine 354. Glutamate 377 is a Ca(2+) binding site. The active-site Charge relay system is the serine 414. Serine 414 contacts substrate. N-linked (GlcNAc...) asparagine glycosylation is found at asparagine 433 and asparagine 518. Residues 490-628 (TVPEQHICTY…SLLLYGTAEP (139 aa)) enclose the P/Homo B domain. An intrachain disulfide couples cysteine 497 to cysteine 526. Residues 629 to 693 (AQPNDPRHSS…LVSAQPELRV (65 aa)) are disordered. A compositionally biased stretch (basic and acidic residues) spans 668-681 (DSRDWQPKKVENKK).

This sequence belongs to the peptidase S8 family. Furin subfamily. Ca(2+) is required as a cofactor. N-glycosylated. In terms of processing, the inhibition peptide, which plays the role of an intramolecular chaperone, is probably autocatalytically removed in the endoplasmic reticulum (ER) and remains non-covalently bound as a potent autoinhibitor. Probably following transport to the trans Golgi, a second cleavage within the inhibition propeptide results in propeptide dissociation and bli activation.

The protein localises to the secreted. It carries out the reaction Release of mature proteins from their proproteins by cleavage of -Arg-Xaa-Yaa-Arg-|-Zaa- bonds, where Xaa can be any amino acid and Yaa is Arg or Lys. Releases albumin, complement component C3 and von Willebrand factor from their respective precursors.. With respect to regulation, inhibited by the propeptide before the second cleavage. Inhibited by ethylenediaminetetraacetic acid (EDTA), ZnSO(4) and chloroketone DEC-RVKR-CMK. Its function is as follows. Serine endoprotease which cleaves substrates at the RX(K/R)R consensus motif. This Onchocerca volvulus protein is Endoprotease bli.